Here is a 151-residue protein sequence, read N- to C-terminus: 3-hydroxyacyl-[acyl-carrier-protein] dehydratase FabZ (151 aa).

H56 is a catalytic residue.

It belongs to the thioester dehydratase family. FabZ subfamily.

It localises to the cytoplasm. It carries out the reaction a (3R)-hydroxyacyl-[ACP] = a (2E)-enoyl-[ACP] + H2O. Involved in unsaturated fatty acids biosynthesis. Catalyzes the dehydration of short chain beta-hydroxyacyl-ACPs and long chain saturated and unsaturated beta-hydroxyacyl-ACPs. The sequence is that of 3-hydroxyacyl-[acyl-carrier-protein] dehydratase FabZ from Nitrobacter winogradskyi (strain ATCC 25391 / DSM 10237 / CIP 104748 / NCIMB 11846 / Nb-255).